Consider the following 455-residue polypeptide: Argininosuccinate lyase (455 aa).

The protein belongs to the lyase 1 family. Argininosuccinate lyase subfamily.

Its subcellular location is the cytoplasm. It catalyses the reaction 2-(N(omega)-L-arginino)succinate = fumarate + L-arginine. Its pathway is amino-acid biosynthesis; L-arginine biosynthesis; L-arginine from L-ornithine and carbamoyl phosphate: step 3/3. This chain is Argininosuccinate lyase, found in Shewanella baltica (strain OS195).